We begin with the raw amino-acid sequence, 95 residues long: Putative protein RDUR (95 aa).

Basic and acidic residues predominate over residues 1–12 (MNNSFNKEDRMS). The segment at 1 to 20 (MNNSFNKEDRMSSDTMVGSC) is disordered.

Could play a role in innate immunity against viruses. The protein is Putative protein RDUR of Homo sapiens (Human).